The sequence spans 552 residues: Lysine--tRNA ligase (552 aa).

The 'HIGH' region motif lies at 71–79 (PSGLPHLGT). The 'KMSKS' region motif lies at 319–323 (KISKS). ATP is bound at residue Lys-322.

Belongs to the class-I aminoacyl-tRNA synthetase family.

It localises to the cytoplasm. The enzyme catalyses tRNA(Lys) + L-lysine + ATP = L-lysyl-tRNA(Lys) + AMP + diphosphate. This Caulobacter sp. (strain K31) protein is Lysine--tRNA ligase.